Reading from the N-terminus, the 949-residue chain is Nonsense-mediated mRNA decay factor SMG8 (949 aa).

Disordered regions lie at residues 564–607, 624–652, and 748–768; these read SGAR…LSPT, NESQ…DTEN, and PKQQ…QQRW. Acidic residues predominate over residues 571–581; it reads EGDDEPEDEVV. Polar residues predominate over residues 594-607; that stretch reads NTASNGCSQPLSPT. The segment covering 624-648 has biased composition (low complexity); that stretch reads NESQASSEQLSNSEQNTSSSGTSSA. Residues 749-768 are compositionally biased toward basic residues; that stretch reads KQQHHTHHQQQHPGKKQQRW.

This sequence belongs to the SMG8 family.

Involved in nonsense-mediated decay (NMD) of mRNAs containing premature stop codons. Probable component of kinase complex containing nonC and recruited to stalled ribosomes. The chain is Nonsense-mediated mRNA decay factor SMG8 from Drosophila erecta (Fruit fly).